Consider the following 161-residue polypeptide: Transcription elongation factor GreA (161 aa).

Positions 45-72 (NAEYHSAKEKLKLIDIQIAELNAVISKA) form a coiled coil.

It belongs to the GreA/GreB family.

Necessary for efficient RNA polymerase transcription elongation past template-encoded arresting sites. The arresting sites in DNA have the property of trapping a certain fraction of elongating RNA polymerases that pass through, resulting in locked ternary complexes. Cleavage of the nascent transcript by cleavage factors such as GreA or GreB allows the resumption of elongation from the new 3'terminus. GreA releases sequences of 2 to 3 nucleotides. This chain is Transcription elongation factor GreA, found in Aliarcobacter butzleri (strain RM4018) (Arcobacter butzleri).